Reading from the N-terminus, the 77-residue chain is Translation initiation factor IF-1, chloroplastic (77 aa).

The 71-residue stretch at 1-71 folds into the S1-like domain; it reads MKEQKWIHEG…TRGRIIYRLR (71 aa).

The protein belongs to the IF-1 family. As to quaternary structure, component of the 30S ribosomal translation pre-initiation complex which assembles on the 30S ribosome in the order IF-2 and IF-3, IF-1 and N-formylmethionyl-tRNA(fMet); mRNA recruitment can occur at any time during PIC assembly.

Its subcellular location is the plastid. The protein localises to the chloroplast. One of the essential components for the initiation of protein synthesis. Stabilizes the binding of IF-2 and IF-3 on the 30S subunit to which N-formylmethionyl-tRNA(fMet) subsequently binds. Helps modulate mRNA selection, yielding the 30S pre-initiation complex (PIC). Upon addition of the 50S ribosomal subunit IF-1, IF-2 and IF-3 are released leaving the mature 70S translation initiation complex. This is Translation initiation factor IF-1, chloroplastic from Garrya elliptica (Wavyleaf silktassel).